The sequence spans 95 residues: Aspartyl/glutamyl-tRNA(Asn/Gln) amidotransferase subunit C (95 aa).

This sequence belongs to the GatC family. In terms of assembly, heterotrimer of A, B and C subunits.

The catalysed reaction is L-glutamyl-tRNA(Gln) + L-glutamine + ATP + H2O = L-glutaminyl-tRNA(Gln) + L-glutamate + ADP + phosphate + H(+). The enzyme catalyses L-aspartyl-tRNA(Asn) + L-glutamine + ATP + H2O = L-asparaginyl-tRNA(Asn) + L-glutamate + ADP + phosphate + 2 H(+). Allows the formation of correctly charged Asn-tRNA(Asn) or Gln-tRNA(Gln) through the transamidation of misacylated Asp-tRNA(Asn) or Glu-tRNA(Gln) in organisms which lack either or both of asparaginyl-tRNA or glutaminyl-tRNA synthetases. The reaction takes place in the presence of glutamine and ATP through an activated phospho-Asp-tRNA(Asn) or phospho-Glu-tRNA(Gln). The sequence is that of Aspartyl/glutamyl-tRNA(Asn/Gln) amidotransferase subunit C from Rhodopseudomonas palustris (strain BisB18).